Reading from the N-terminus, the 502-residue chain is ATP synthase subunit alpha (502 aa).

169 to 176 lines the ATP pocket; the sequence is GDRQTGKT.

Belongs to the ATPase alpha/beta chains family. F-type ATPases have 2 components, CF(1) - the catalytic core - and CF(0) - the membrane proton channel. CF(1) has five subunits: alpha(3), beta(3), gamma(1), delta(1), epsilon(1). CF(0) has three main subunits: a(1), b(2) and c(9-12). The alpha and beta chains form an alternating ring which encloses part of the gamma chain. CF(1) is attached to CF(0) by a central stalk formed by the gamma and epsilon chains, while a peripheral stalk is formed by the delta and b chains.

Its subcellular location is the cell inner membrane. The enzyme catalyses ATP + H2O + 4 H(+)(in) = ADP + phosphate + 5 H(+)(out). Functionally, produces ATP from ADP in the presence of a proton gradient across the membrane. The alpha chain is a regulatory subunit. The chain is ATP synthase subunit alpha from Nitratidesulfovibrio vulgaris (strain DSM 19637 / Miyazaki F) (Desulfovibrio vulgaris).